The sequence spans 425 residues: Serine--tRNA ligase (425 aa).

233-235 (TAE) is a binding site for L-serine. 264 to 266 (RRE) is an ATP binding site. Position 287 (Glu287) interacts with L-serine. 351-354 (EISS) is a binding site for ATP. Ser385 contributes to the L-serine binding site.

This sequence belongs to the class-II aminoacyl-tRNA synthetase family. Type-1 seryl-tRNA synthetase subfamily. Homodimer. The tRNA molecule binds across the dimer.

It is found in the cytoplasm. The catalysed reaction is tRNA(Ser) + L-serine + ATP = L-seryl-tRNA(Ser) + AMP + diphosphate + H(+). The enzyme catalyses tRNA(Sec) + L-serine + ATP = L-seryl-tRNA(Sec) + AMP + diphosphate + H(+). The protein operates within aminoacyl-tRNA biosynthesis; selenocysteinyl-tRNA(Sec) biosynthesis; L-seryl-tRNA(Sec) from L-serine and tRNA(Sec): step 1/1. Catalyzes the attachment of serine to tRNA(Ser). Is also able to aminoacylate tRNA(Sec) with serine, to form the misacylated tRNA L-seryl-tRNA(Sec), which will be further converted into selenocysteinyl-tRNA(Sec). This chain is Serine--tRNA ligase, found in Synechococcus sp. (strain CC9902).